The sequence spans 465 residues: Siroheme synthase (465 aa).

The precorrin-2 dehydrogenase /sirohydrochlorin ferrochelatase stretch occupies residues 1–203 (MDFLPLFHSL…GRPAEAERLL (203 aa)). NAD(+) contacts are provided by residues 22-23 (EV) and 43-44 (PQ). At Ser128 the chain carries Phosphoserine. A uroporphyrinogen-III C-methyltransferase region spans residues 217–465 (GEVYLVGAGP…AWFEGAREGA (249 aa)). Pro226 is a binding site for S-adenosyl-L-methionine. The active-site Proton acceptor is Asp249. Lys271 functions as the Proton donor in the catalytic mechanism. Residues 302–304 (GGD), Ile307, 332–333 (TA), Met384, and Gly413 each bind S-adenosyl-L-methionine.

The protein in the N-terminal section; belongs to the precorrin-2 dehydrogenase / sirohydrochlorin ferrochelatase family. This sequence in the C-terminal section; belongs to the precorrin methyltransferase family.

It catalyses the reaction uroporphyrinogen III + 2 S-adenosyl-L-methionine = precorrin-2 + 2 S-adenosyl-L-homocysteine + H(+). The catalysed reaction is precorrin-2 + NAD(+) = sirohydrochlorin + NADH + 2 H(+). The enzyme catalyses siroheme + 2 H(+) = sirohydrochlorin + Fe(2+). The protein operates within cofactor biosynthesis; adenosylcobalamin biosynthesis; precorrin-2 from uroporphyrinogen III: step 1/1. It functions in the pathway cofactor biosynthesis; adenosylcobalamin biosynthesis; sirohydrochlorin from precorrin-2: step 1/1. It participates in porphyrin-containing compound metabolism; siroheme biosynthesis; precorrin-2 from uroporphyrinogen III: step 1/1. Its pathway is porphyrin-containing compound metabolism; siroheme biosynthesis; siroheme from sirohydrochlorin: step 1/1. The protein operates within porphyrin-containing compound metabolism; siroheme biosynthesis; sirohydrochlorin from precorrin-2: step 1/1. In terms of biological role, multifunctional enzyme that catalyzes the SAM-dependent methylations of uroporphyrinogen III at position C-2 and C-7 to form precorrin-2 via precorrin-1. Then it catalyzes the NAD-dependent ring dehydrogenation of precorrin-2 to yield sirohydrochlorin. Finally, it catalyzes the ferrochelation of sirohydrochlorin to yield siroheme. The protein is Siroheme synthase of Pseudomonas paraeruginosa (strain DSM 24068 / PA7) (Pseudomonas aeruginosa (strain PA7)).